The primary structure comprises 702 residues: Arginine decarboxylase 1, chloroplastic (702 aa).

The transit peptide at 1-52 directs the protein to the chloroplast; that stretch reads MPALAFVDTPIDTFSSIFTPSSVSTAVVDGSCHWSPSLSSSLYRIDGWGAPY. K136 is modified (N6-(pyridoxal phosphate)lysine). Residues S288, G325, and 374–377 each bind pyridoxal 5'-phosphate; that span reads ESGR. 320–330 contacts substrate; sequence IDIGGGLGIDY. 436 to 437 lines the substrate pocket; it reads YV. C524 acts as the Proton donor; shared with dimeric partner in catalysis. D525 contributes to the substrate binding site. Residue Y565 coordinates pyridoxal 5'-phosphate.

The protein belongs to the Orn/Lys/Arg decarboxylase class-II family. SpeA subfamily. In terms of assembly, homodimer. Only the dimer is catalytically active, as the active sites are constructed of residues from both monomers. May form a head-to-tail homodimer. Homodimer and heterodimer with ADC2. Pyridoxal 5'-phosphate serves as cofactor. It depends on Mg(2+) as a cofactor.

The protein localises to the plastid. It is found in the chloroplast. The protein resides in the cytoplasm. It localises to the cytosol. It catalyses the reaction L-arginine + H(+) = agmatine + CO2. The protein operates within amine and polyamine biosynthesis; agmatine biosynthesis; agmatine from L-arginine: step 1/1. Required for the biosynthesis of putrescine. Catalyzes the first step of polyamine (PA) biosynthesis to produce putrescine from arginine. Is a minor contributor to basal arginine decarboxylase (ADC) activity and putrescine biosynthesis. Accumulation of putrescine plays a positive role in freezing tolerance. Production of polyamines is essential for normal seed development. Controls PA homeostasis which is crucial for normal plant growth and development. This chain is Arginine decarboxylase 1, chloroplastic, found in Arabidopsis thaliana (Mouse-ear cress).